Here is a 507-residue protein sequence, read N- to C-terminus: UDP-glycosyltransferase 73D1 (507 aa).

UDP-alpha-D-glucose-binding positions include serine 298, serine 359–glutamine 361, histidine 376–glutamate 384, and phenylalanine 398–glutamine 401.

It belongs to the UDP-glycosyltransferase family.

The sequence is that of UDP-glycosyltransferase 73D1 (UGT73D1) from Arabidopsis thaliana (Mouse-ear cress).